We begin with the raw amino-acid sequence, 180 residues long: Large ribosomal subunit protein uL5c (180 aa).

The protein belongs to the universal ribosomal protein uL5 family. Part of the 50S ribosomal subunit; contacts the 5S rRNA.

The protein localises to the plastid. Its subcellular location is the chloroplast. Its function is as follows. Binds 5S rRNA, forms part of the central protuberance of the 50S subunit. The polypeptide is Large ribosomal subunit protein uL5c (rpl5) (Stigeoclonium helveticum (Green alga)).